Consider the following 465-residue polypeptide: MALLIAWVCVAVSIEKALGGQGDGGDLYSENITRILDKLLDGYDNRLRPGFGGAVTEVKTDIYVTSFGPVSDVEMEYTMDVFFRQTWTDERLKFGGPTEILRLNNLMVSKIWTPDTFFRNGKKSIAHNMTTPNKLFRIMQNGTILYTMRLTINADCPMRLVNFPMDGHACPLKFGSYAYPKSEIIYTWKKGPLHSVEVPQESSSLLQYDLIGQTVSSETIKSNTGEYVIMTVYFHLQRKMGYFMIQIYTPCIMTVILSQVSFWINKESVPARTVFGITTVLTMTTLSISARHSLPKVSYATAMDWFIAVCFAFVFSALIEFAAVNYFTNLQTQRAMRKAARAAALAAALSAATVPAEDEIVSHSDSNCNLKKRVNSVTSQADQSPEASIVSNSASQCQPVSAPPPAPPAPPPVGGTSKIDQYSRILFPVAFAGFNLVYWVVYLSKDTMEFFEPTAMHLRNDHQSN.

The N-terminal stretch at 1 to 19 is a signal peptide; it reads MALLIAWVCVAVSIEKALG. Residues 20–243 lie on the Extracellular side of the membrane; it reads GQGDGGDLYS…FHLQRKMGYF (224 aa). Asn-31 is a glycosylation site (N-linked (GlcNAc...) asparagine). Position 84 (Arg-84) interacts with 4-aminobutanoate. 2 N-linked (GlcNAc...) asparagine glycosylation sites follow: Asn-128 and Asn-141. Residue Thr-147 participates in 4-aminobutanoate binding. An intrachain disulfide couples Cys-156 to Cys-170. The chain crosses the membrane as a helical span at residues 244 to 264; that stretch reads MIQIYTPCIMTVILSQVSFWI. The Cytoplasmic portion of the chain corresponds to 265 to 270; the sequence is NKESVP. A helical transmembrane segment spans residues 271–290; it reads ARTVFGITTVLTMTTLSISA. Residues 291-304 are Extracellular-facing; the sequence is RHSLPKVSYATAMD. Residues 305–325 traverse the membrane as a helical segment; sequence WFIAVCFAFVFSALIEFAAVN. Residues 326 to 424 are Cytoplasmic-facing; sequence YFTNLQTQRA…GTSKIDQYSR (99 aa). The disordered stretch occupies residues 392-415; it reads NSASQCQPVSAPPPAPPAPPPVGG. The segment covering 401–413 has biased composition (pro residues); sequence SAPPPAPPAPPPV. Residues 425–445 traverse the membrane as a helical segment; sequence ILFPVAFAGFNLVYWVVYLSK. At 446–465 the chain is on the extracellular side; that stretch reads DTMEFFEPTAMHLRNDHQSN.

Belongs to the ligand-gated ion channel (TC 1.A.9) family. Gamma-aminobutyric acid receptor (TC 1.A.9.5) subfamily. GABRA6 sub-subfamily. As to quaternary structure, heteropentamer, formed by a combination of alpha (GABRA1-6), beta (GABRB1-3), gamma (GABRG1-3), delta (GABRD), epsilon (GABRE), rho (GABRR1-3), pi (GABRP) and theta (GABRQ) chains, each subunit exhibiting distinct physiological and pharmacological properties. Expressed in brain, in cerebellar granule cells.

Its subcellular location is the postsynaptic cell membrane. The protein resides in the cell membrane. The catalysed reaction is chloride(in) = chloride(out). Its function is as follows. Alpha subunit of the heteropentameric ligand-gated chloride channel gated by gamma-aminobutyric acid (GABA), a major inhibitory neurotransmitter in the brain. GABA-gated chloride channels, also named GABA(A) receptors (GABAAR), consist of five subunits arranged around a central pore and contain GABA active binding site(s) located at the alpha and beta subunit interface(s). When activated by GABA, GABAARs selectively allow the flow of chloride anions across the cell membrane down their electrochemical gradient. This chain is Gamma-aminobutyric acid receptor subunit alpha-6 (GABRA6), found in Gallus gallus (Chicken).